The chain runs to 1159 residues: RAD51-associated protein 2 (1159 aa).

Residues 1–35 (MSLPQPTPRMAELRKPTSSLTPPEDPDSQPPSSKR) are disordered. An interaction with RAD51 region spans residues 1111-1159 (SHFPHGISRVRPLKTCSRPIRIGLSRKARIKQLHPYLKQMCYGNLKENF).

In terms of assembly, interacts with RAD51. In terms of tissue distribution, specifically expressed in meiotic tissues. Highly expressed in testis.

This is RAD51-associated protein 2 (RAD51AP2) from Homo sapiens (Human).